Here is a 1334-residue protein sequence, read N- to C-terminus: Rho1 guanine nucleotide exchange factor 1 (1334 aa).

4 disordered regions span residues 1-89 (MDYR…ASPV), 135-182 (PQVS…SDSV), 203-245 (LDQN…TSGT), and 381-402 (SLIN…ASSP). The segment covering 138 to 149 (SNHAPNNSNSPS) has biased composition (low complexity). Over residues 150-164 (LTWHTSSGDDSNQNP) the composition is skewed to polar residues. The segment covering 170 to 180 (QSQSSTSPVSD) has biased composition (low complexity). Polar residues-rich tracts occupy residues 213–227 (VRSS…NSRL), 234–245 (HTVGSHSFTSGT), and 381–400 (SLIN…SEAS). Residue Ser-381 is modified to Phosphoserine. The DH domain occupies 621–808 (KRQEVICEVI…RGFLSRLNVE (188 aa)). The PH domain maps to 843–973 (QLIFKGPLKK…WLEHIDNQQT (131 aa)). In terms of domain architecture, CNH spans 995 to 1293 (DNKVNAIGVY…RLLADGRGKL (299 aa)).

The protein resides in the cytoplasm. Stimulates the exchange of Rho1 and Rho5 GDP-bound form into GTP-bound form. Controls septum formation, cell wall synthesis and localization of F-actin patches. Coordinates actin deposition with cell wall biosynthesis during bipolar growth. The polypeptide is Rho1 guanine nucleotide exchange factor 1 (rgf1) (Schizosaccharomyces pombe (strain 972 / ATCC 24843) (Fission yeast)).